A 637-amino-acid chain; its full sequence is Threonine--tRNA ligase (637 aa).

Residues 1–61 (MITITLPDSS…ATDAAVRLIT (61 aa)) enclose the TGS domain. The tract at residues 238–528 (DHRKLGAELD…LIEHFAGKFP (291 aa)) is catalytic. Residues cysteine 329, histidine 380, and histidine 505 each contribute to the Zn(2+) site.

It belongs to the class-II aminoacyl-tRNA synthetase family. In terms of assembly, homodimer. Zn(2+) serves as cofactor.

The protein resides in the cytoplasm. It carries out the reaction tRNA(Thr) + L-threonine + ATP = L-threonyl-tRNA(Thr) + AMP + diphosphate + H(+). Its function is as follows. Catalyzes the attachment of threonine to tRNA(Thr) in a two-step reaction: L-threonine is first activated by ATP to form Thr-AMP and then transferred to the acceptor end of tRNA(Thr). Also edits incorrectly charged L-seryl-tRNA(Thr). The chain is Threonine--tRNA ligase from Desulfosudis oleivorans (strain DSM 6200 / JCM 39069 / Hxd3) (Desulfococcus oleovorans).